The chain runs to 536 residues: Velvet complex subunit B (536 aa).

A compositionally biased stretch (polar residues) spans 1 to 26; it reads MIQRTTDPAAGSSTSGPPTNSLSWGS. Disordered stretches follow at residues 1–27, 106–143, 157–409, and 508–536; these read MIQR…WGSR, PNAA…AIPF, SAPA…RTLV, and KLPL…EESD. A Velvet domain is found at 25–512; the sequence is GSRHNGKLYT…NQQNMKLPLR (488 aa). Pro residues predominate over residues 114-143; it reads PPMPAKPRRPTNPPPPSNTHGSPPAPAIPF. 2 stretches are compositionally biased toward low complexity: residues 158-170 and 190-265; these read APAS…SASA and PYGP…YPPY. Residues 280–305 show a composition bias toward polar residues; sequence TSNFDHSQPVTSSVDQETNSPVVTTT. Over residues 306–315 the composition is skewed to basic and acidic residues; the sequence is ARDDDQREGE. Residues 328–342 show a composition bias toward low complexity; that stretch reads PSNSGAPSTSPTAST. Residues 356-399 show a composition bias toward basic and acidic residues; the sequence is EEREGPDGGPDLREPIEPGSTKAREEEDARTGTEKGDPKDKSDA. Residues 400 to 409 are compositionally biased toward polar residues; the sequence is QRATYTRTLV. The span at 511–525 shows a compositional bias: basic residues; the sequence is LRNRHGSGSKRRRRG.

It belongs to the velvet family. VelB subfamily. In terms of assembly, component of the heterotrimeric velvet complex composed of laeA, veA and velB; VeA acting as a bridging protein between laeA and velB. Forms a heterodimeric complex with vosA; the formation of the velB-vosA complex is light-dependent.

The protein resides in the nucleus. The protein localises to the cytoplasm. Its function is as follows. Component of the velvet transcription factor complex that controls sexual/asexual developmental ratio in response to light, promoting sexual development in the darkness while stimulating asexual sporulation under illumination. The velvet complex acts as a global regulator for secondary metabolite gene expression. Component of the velB-VosA heterodimeric complex that plays a dual role in activating genes associated with spore maturation and repressing certain development-associated genes. The velB-VosA complex binds DNA through the DNA-binding domain of vosA that recognizes an 11-nucleotide consensus sequence 5'-CTGGCCGCGGC-3' consisting of two motifs in the promoters of key developmental regulatory genes. The polypeptide is Velvet complex subunit B (Schizophyllum commune (strain H4-8 / FGSC 9210) (Split gill fungus)).